A 126-amino-acid polypeptide reads, in one-letter code: Aspartate 1-decarboxylase (126 aa).

Serine 25 functions as the Schiff-base intermediate with substrate; via pyruvic acid in the catalytic mechanism. Serine 25 carries the post-translational modification Pyruvic acid (Ser). Residue threonine 57 participates in substrate binding. Catalysis depends on tyrosine 58, which acts as the Proton donor. 73-75 (GAA) serves as a coordination point for substrate.

The protein belongs to the PanD family. In terms of assembly, heterooctamer of four alpha and four beta subunits. Pyruvate is required as a cofactor. In terms of processing, is synthesized initially as an inactive proenzyme, which is activated by self-cleavage at a specific serine bond to produce a beta-subunit with a hydroxyl group at its C-terminus and an alpha-subunit with a pyruvoyl group at its N-terminus.

Its subcellular location is the cytoplasm. The enzyme catalyses L-aspartate + H(+) = beta-alanine + CO2. Its pathway is cofactor biosynthesis; (R)-pantothenate biosynthesis; beta-alanine from L-aspartate: step 1/1. In terms of biological role, catalyzes the pyruvoyl-dependent decarboxylation of aspartate to produce beta-alanine. In Pseudomonas fluorescens, this protein is Aspartate 1-decarboxylase.